The sequence spans 107 residues: ATP-dependent Clp protease adapter protein ClpS (107 aa).

Belongs to the ClpS family. As to quaternary structure, binds to the N-terminal domain of the chaperone ClpA.

Functionally, involved in the modulation of the specificity of the ClpAP-mediated ATP-dependent protein degradation. The protein is ATP-dependent Clp protease adapter protein ClpS of Syntrophus aciditrophicus (strain SB).